Here is a 512-residue protein sequence, read N- to C-terminus: Beta-glucosidase 44 (512 aa).

The N-terminal stretch at 1-23 (MRHLSSPPWPLLLLLLLSSFTSG) is a signal peptide. Gln58 is an a beta-D-glucoside binding site. N-linked (GlcNAc...) asparagine glycosylation is present at Asn86. A beta-D-glucoside-binding positions include His159 and 204-205 (NE). Glu205 (proton donor) is an active-site residue. Cys224 and Cys231 are joined by a disulfide. N-linked (GlcNAc...) asparagine glycosylation occurs at Asn230. Residues Tyr347 and Glu419 each coordinate a beta-D-glucoside. Residue Glu419 is the Nucleophile of the active site. N-linked (GlcNAc...) asparagine glycosylation occurs at Asn427. A beta-D-glucoside contacts are provided by residues Trp466, 473–474 (EW), and Phe482.

The protein belongs to the glycosyl hydrolase 1 family. Homodimer.

It is found in the secreted. The enzyme catalyses Hydrolysis of terminal, non-reducing beta-D-glucosyl residues with release of beta-D-glucose.. Hydrolyzes p-nitrophenyl beta-D-glucoside, p-nitrophenyl beta-D-mannoside, cellobiose, 4-methylumbelliferyl-beta-D-glucoside, laminarin, amygdalin, esculin and gentiobiose. This Arabidopsis thaliana (Mouse-ear cress) protein is Beta-glucosidase 44.